We begin with the raw amino-acid sequence, 86 residues long: Cell division topological specificity factor (86 aa).

The protein belongs to the MinE family.

Functionally, prevents the cell division inhibition by proteins MinC and MinD at internal division sites while permitting inhibition at polar sites. This ensures cell division at the proper site by restricting the formation of a division septum at the midpoint of the long axis of the cell. This is Cell division topological specificity factor from Rhizobium rhizogenes (strain K84 / ATCC BAA-868) (Agrobacterium radiobacter).